A 330-amino-acid polypeptide reads, in one-letter code: Mitochondrial glycine transporter (330 aa).

3 Solcar repeats span residues 11–94 (SSSY…LRQN), 122–206 (LSNL…LKKR), and 234–318 (TSAS…LIRR). 6 helical membrane-spanning segments follow: residues 17-42 (FTAGLGSGILSAVLLQPADLLKTRLQ), 69-95 (GTVPSALRTGFGSAIYFTSLNALRQNV), 128-153 (LTTGAVARAGAGFVLMPMTIIKVRYE), 181-204 (GFGATAIRDAPYAGLYVLFYEQLK), 238-264 (INFGSGVLAAGLATAITNPFDAIKTRI), and 293-311 (GLGLRMGRKAVSSALAWTI).

Belongs to the mitochondrial carrier (TC 2.A.29) family. SLC25A38 subfamily.

Its subcellular location is the mitochondrion inner membrane. The enzyme catalyses glycine(in) = glycine(out). Functionally, mitochondrial glycine transporter that imports glycine into the mitochondrial matrix. Plays an important role in providing glycine for the first enzymatic step in heme biosynthesis, the condensation of glycine with succinyl-CoA to produce 5-aminolevulinate (ALA) in the mitochondrial matrix. The sequence is that of Mitochondrial glycine transporter from Sclerotinia sclerotiorum (strain ATCC 18683 / 1980 / Ss-1) (White mold).